The following is a 292-amino-acid chain: N-acetylneuraminate lyase (292 aa).

2 residues coordinate aceneuramate: Ser-46 and Thr-47. Tyr-135 functions as the Proton donor in the catalytic mechanism. Catalysis depends on Lys-163, which acts as the Schiff-base intermediate with substrate. The aceneuramate site is built by Thr-165, Gly-187, Asp-189, Glu-190, and Ser-206.

This sequence belongs to the DapA family. NanA subfamily. As to quaternary structure, homotetramer.

The protein localises to the cytoplasm. It catalyses the reaction aceneuramate = aldehydo-N-acetyl-D-mannosamine + pyruvate. The protein operates within amino-sugar metabolism; N-acetylneuraminate degradation; D-fructose 6-phosphate from N-acetylneuraminate: step 1/5. Catalyzes the reversible aldol cleavage of N-acetylneuraminic acid (sialic acid; Neu5Ac) to form pyruvate and N-acetylmannosamine (ManNAc) via a Schiff base intermediate. This Lactiplantibacillus plantarum (strain ATCC BAA-793 / NCIMB 8826 / WCFS1) (Lactobacillus plantarum) protein is N-acetylneuraminate lyase.